Here is a 195-residue protein sequence, read N- to C-terminus: Imidazoleglycerol-phosphate dehydratase (195 aa).

The protein belongs to the imidazoleglycerol-phosphate dehydratase family.

It localises to the cytoplasm. The catalysed reaction is D-erythro-1-(imidazol-4-yl)glycerol 3-phosphate = 3-(imidazol-4-yl)-2-oxopropyl phosphate + H2O. It participates in amino-acid biosynthesis; L-histidine biosynthesis; L-histidine from 5-phospho-alpha-D-ribose 1-diphosphate: step 6/9. The chain is Imidazoleglycerol-phosphate dehydratase from Alkaliphilus metalliredigens (strain QYMF).